The primary structure comprises 397 residues: ATP phosphoribosyltransferase regulatory subunit (397 aa).

The protein belongs to the class-II aminoacyl-tRNA synthetase family. HisZ subfamily. In terms of assembly, heteromultimer composed of HisG and HisZ subunits.

The protein localises to the cytoplasm. It participates in amino-acid biosynthesis; L-histidine biosynthesis; L-histidine from 5-phospho-alpha-D-ribose 1-diphosphate: step 1/9. Its function is as follows. Required for the first step of histidine biosynthesis. May allow the feedback regulation of ATP phosphoribosyltransferase activity by histidine. In Nitrosococcus oceani (strain ATCC 19707 / BCRC 17464 / JCM 30415 / NCIMB 11848 / C-107), this protein is ATP phosphoribosyltransferase regulatory subunit.